Reading from the N-terminus, the 530-residue chain is MEPRTVAEAVETGKEDVIMEALRSYNQEHSQSFTFDDAQQEDRKRLAELLVSVLEQGLPPSHRVTWLQSVRILSRDHNCLDPFTSRQSLQALACYADISVSEGSVPESPDMDVVLESLKCLCNLVLSSPVAQMLAAEARLVVKLTERVGLYRERSFPHDVQFFDLRLLFLLTALRTDVRQQLFQELKGVRLLTDTLELTLGVTPEGNPPKLLPSQETERAMEILKVLFNITLDSIKGEVDEEDAALYRHLGTLLRHCVMIATAGDRTEEFHGHAVNLLGNLPLKCLDVLFTLEPHGDSVEFMGVNMDVIRALLIFLEKRLHQTHRLKESVAPVLSVLTECARMHRPARKFLKAQVLPPLRDVRTRPEVGEMLRNKLVRLMTHLDTDVKRVAAEFLFVLCSESVPRFIKYTGYGNAAGLLAARGLMAGGRPEGQYSEDEDTDTDEYKEAKASINPVTGRVEEKPPNPMEGMTEEQKEHEAMKLVTMFDKLSRNRVIQPMGMSPRGHLTSLQDAMCETMEQQLSSDPDSDPD.

Ser-435 carries the post-translational modification Phosphoserine. Thr-440 and Thr-442 each carry phosphothreonine. Phosphoserine occurs at positions 501, 522, 523, and 527.

Belongs to the synembryn family. Interacts with GDP-bound G alpha proteins GNAI1, GNAO1 and GNAQ, and with GNA13 with lower affinity. Does not interact with G-alpha proteins when they are in complex with subunits beta and gamma. Interacts (via C-terminus) with RGS14; the interaction stimulates the dissociation of the complex between RGS14 and the active GTP-bound form of GNAI1. Interacts with NCS1; interaction is favored in the absence of Ca(2+) and myristoylation of NCS1 is not required. In terms of processing, phosphorylated at Ser-435 and Thr-440 by CK2, stabilizing its interface with G alpha proteins.

It is found in the cytoplasm. It localises to the cell cortex. Chaperone that specifically binds and folds nascent G alpha proteins prior to G protein heterotrimer formation, promoting their stability and activity: folds GNAI1, GNAO1, GNA13 and GNAQ. Does not fold G(s) G-alpha proteins GNAS nor GNAL. Also acts as a guanine nucleotide exchange factor (GEF) for G alpha proteins by stimulating exchange of bound GDP for free GTP. Involved in regulation of microtubule pulling forces during mitotic movement of chromosomes by stimulating G(i)-alpha protein (GNAI1), possibly leading to release G(i)-alpha-GTP and NuMA proteins from the NuMA-GPSM2-G(i)-alpha-GDP complex. Also acts as an activator for G(q)-alpha (GNAQ) protein by enhancing the G(q)-coupled receptor-mediated ERK activation. The chain is Chaperone Ric-8A (RIC8A) from Pongo abelii (Sumatran orangutan).